A 932-amino-acid chain; its full sequence is Serine/threonine-protein kinase PknD (932 aa).

A Protein kinase domain is found at 4–291; it reads YDIVRIIGKG…ELKEDIESHL (288 aa). ATP contacts are provided by residues 10–18 and Lys-33; that span reads IGKGGMGEV. Asp-138 acts as the Proton acceptor in catalysis.

The protein belongs to the protein kinase superfamily. Ser/Thr protein kinase family. Autophosphorylated on serine and threonine residues.

The enzyme catalyses L-seryl-[protein] + ATP = O-phospho-L-seryl-[protein] + ADP + H(+). The catalysed reaction is L-threonyl-[protein] + ATP = O-phospho-L-threonyl-[protein] + ADP + H(+). Functionally, together with the serine/threonine kinase Pkn1, may play a role in the specific interactions with host proteins during intracellular growth. This is Serine/threonine-protein kinase PknD from Chlamydia pneumoniae (Chlamydophila pneumoniae).